A 306-amino-acid polypeptide reads, in one-letter code: Agmatinase (306 aa).

His126, Asp149, His151, Asp153, Asp230, and Asp232 together coordinate Mn(2+).

Belongs to the arginase family. Agmatinase subfamily. Mn(2+) is required as a cofactor.

It catalyses the reaction agmatine + H2O = urea + putrescine. The protein operates within amine and polyamine biosynthesis; putrescine biosynthesis via agmatine pathway; putrescine from agmatine: step 1/1. Its function is as follows. Catalyzes the formation of putrescine from agmatine. The polypeptide is Agmatinase (Klebsiella pneumoniae (strain 342)).